We begin with the raw amino-acid sequence, 91 residues long: Late embryogenis abundant protein 2 (91 aa).

Residues 47-72 (KRAGEASSEKAPWVPDPKTGYYRPET) are disordered.

The protein belongs to the LEA type 3 family.

The protein resides in the cytoplasm. It localises to the nucleus. This Arabidopsis thaliana (Mouse-ear cress) protein is Late embryogenis abundant protein 2.